The following is a 350-amino-acid chain: N-acetyllactosaminide beta-1,3-N-acetylglucosaminyltransferase 4 (350 aa).

The Cytoplasmic segment spans residues 1 to 4 (MLPR). Residues 5-25 (LGCVLFCSLVVLLLSCLLLLK) traverse the membrane as a helical; Signal-anchor for type II membrane protein segment. The Lumenal segment spans residues 26-350 (ERIPAGSSKA…RLKCAATHKP (325 aa)). Residues N53 and N166 are each glycosylated (N-linked (GlcNAc...) asparagine).

This sequence belongs to the glycosyltransferase 31 family.

Its subcellular location is the golgi apparatus membrane. The catalysed reaction is a beta-D-galactosyl-(1-&gt;4)-N-acetyl-beta-D-glucosaminyl derivative + UDP-N-acetyl-alpha-D-glucosamine = an N-acetyl-beta-D-glucosaminyl-(1-&gt;3)-beta-D-galactosyl-(1-&gt;4)-N-acetyl-beta-D-glucosaminyl derivative + UDP + H(+). The protein operates within protein modification; protein glycosylation. In terms of biological role, beta-1,3-N-acetylglucosaminyltransferase involved in the synthesis of poly-N-acetyllactosamine. Has activity for type 2 oligosaccharides. The polypeptide is N-acetyllactosaminide beta-1,3-N-acetylglucosaminyltransferase 4 (B3gnt4) (Mus musculus (Mouse)).